The chain runs to 206 residues: Triafestin-2 (206 aa).

Residues 1–18 (MKTILAVIFFGILAFAFA) form the signal peptide. 3 N-linked (GlcNAc...) asparagine glycosylation sites follow: Asn25, Asn55, and Asn178.

This sequence belongs to the calycin superfamily. Triabin family. As to quaternary structure, interacts with host coagulation factor XII (F12) (inactive and activated) (via amino acids 1-77). Interacts with host high molecular weight kininogen (KNG1) (via amino acids 402-532). As to expression, salivary gland (at protein level).

Its subcellular location is the secreted. Zn(2+) modulates binding to host coagulation factor XII (F12) and high molecular weight kininogen (KNG1). In terms of biological role, suppresses activation of the host plasma kallikrein-kinin system, leading to inhibition of the intrinsic coagulation pathway. Blocks host coagulation factor XII (F12) and prekallikrein (KLKB1) reciprocal activation without affecting their amidolytic activities. Blocks binding of host F12 and high molecular weight kininogen (KNG1) to negatively charged surfaces. Attenuates generation of bradykinin by interfering with activation of host kallikrein-kinin system. In Triatoma infestans (Assassin bug), this protein is Triafestin-2.